The chain runs to 82 residues: Cytochrome b-c1 complex subunit 8 (82 aa).

Residues G2–L39 lie on the Mitochondrial matrix side of the membrane. At K33 the chain carries N6-acetyllysine; alternate. An N6-succinyllysine; alternate modification is found at K33. The helical transmembrane segment at R40–E68 threads the bilayer. The Mitochondrial intermembrane segment spans residues K69 to R82.

This sequence belongs to the UQCRQ/QCR8 family. Component of the ubiquinol-cytochrome c oxidoreductase (cytochrome b-c1 complex, complex III, CIII), a multisubunit enzyme composed of 11 subunits. The complex is composed of 3 respiratory subunits cytochrome b, cytochrome c1 and Rieske protein UQCRFS1, 2 core protein subunits UQCRC1/QCR1 and UQCRC2/QCR2, and 6 low-molecular weight protein subunits UQCRH/QCR6, UQCRB/QCR7, UQCRQ/QCR8, UQCR10/QCR9, UQCR11/QCR10 and subunit 9, the cleavage product of Rieske protein UQCRFS1. The complex exists as an obligatory dimer and forms supercomplexes (SCs) in the inner mitochondrial membrane with NADH-ubiquinone oxidoreductase (complex I, CI) and cytochrome c oxidase (complex IV, CIV), resulting in different assemblies (supercomplex SCI(1)III(2)IV(1) and megacomplex MCI(2)III(2)IV(2)). Interacts with UQCC6.

It localises to the mitochondrion inner membrane. Its function is as follows. Component of the ubiquinol-cytochrome c oxidoreductase, a multisubunit transmembrane complex that is part of the mitochondrial electron transport chain which drives oxidative phosphorylation. The respiratory chain contains 3 multisubunit complexes succinate dehydrogenase (complex II, CII), ubiquinol-cytochrome c oxidoreductase (cytochrome b-c1 complex, complex III, CIII) and cytochrome c oxidase (complex IV, CIV), that cooperate to transfer electrons derived from NADH and succinate to molecular oxygen, creating an electrochemical gradient over the inner membrane that drives transmembrane transport and the ATP synthase. The cytochrome b-c1 complex catalyzes electron transfer from ubiquinol to cytochrome c, linking this redox reaction to translocation of protons across the mitochondrial inner membrane, with protons being carried across the membrane as hydrogens on the quinol. In the process called Q cycle, 2 protons are consumed from the matrix, 4 protons are released into the intermembrane space and 2 electrons are passed to cytochrome c. In Bos taurus (Bovine), this protein is Cytochrome b-c1 complex subunit 8 (UQCRQ).